The following is a 518-amino-acid chain: MAVALGCAIQASLNQGSVFQEYDTDCEVFRQRFRQFQYREAAGPHEAFNKLWELCCQWLKPKMRSKEQILELLVLEQFLTILPTEIETWVREHCPENRERVVSLIEDLQRELEIPEQQVDMHDMLLEELAPVGTAHIPPTMHLESPALQVMGPAQEAPVAEAWIPQAGPPELNYGATGECQNFLDPGYPLPKLDMNFSLENREEPWVKELQDSKEMKQLLDSKIGFEIGIENEEDTSKQKKMETMYPFIVTLEGNALQGPILQKDYVQLENQWETPPEDLQTDLAKLVDQQNPTLGETPENSNLEEPLNPKPHKKKSPGEKPHRCPQCGKCFARKSQLTGHQRIHSGEEPHKCPECGKRFLRSSDLYRHQRLHTGERPYECTVCKKRFTRRSHLIGHQRTHSEEETYKCLECGKSFCHGSSLKRHLKTHTGEKPHRCHNCGKSFSRLTALTLHQRTHTEERPFKCNYCGKSFRQRPSLVIHLRIHTGEKPYKCTHCSKSFRQRAGLIMHQVTHFRGLI.

The SCAN box domain occupies 30–112 (RQRFRQFQYR…SLIEDLQREL (83 aa)). Residues 292–304 (NPTLGETPENSNL) show a composition bias toward polar residues. The interval 292 to 325 (NPTLGETPENSNLEEPLNPKPHKKKSPGEKPHRC) is disordered. 7 consecutive C2H2-type zinc fingers follow at residues 323–345 (HRCP…QRIH), 351–373 (HKCP…QRLH), 379–401 (YECT…QRTH), 407–429 (YKCL…LKTH), 435–457 (HRCH…QRTH), 463–485 (FKCN…LRIH), and 491–513 (YKCT…QVTH).

Belongs to the krueppel C2H2-type zinc-finger protein family.

It is found in the nucleus. May be involved in transcriptional regulation. In Homo sapiens (Human), this protein is Zinc finger protein 449 (ZNF449).